Here is a 575-residue protein sequence, read N- to C-terminus: Eukaryotic translation initiation factor 3 subunit D (575 aa).

Disordered stretches follow at residues P36 to R66 and S103 to V177. The span at K39–G59 shows a compositional bias: basic and acidic residues. Positions F109 to G144 are enriched in gly residues. Over residues G163–D174 the composition is skewed to basic and acidic residues. The tract at residues N302–P316 is RNA gate.

The protein belongs to the eIF-3 subunit D family. As to quaternary structure, component of the eukaryotic translation initiation factor 3 (eIF-3) complex.

The protein localises to the cytoplasm. MRNA cap-binding component of the eukaryotic translation initiation factor 3 (eIF-3) complex, which is involved in protein synthesis of a specialized repertoire of mRNAs and, together with other initiation factors, stimulates binding of mRNA and methionyl-tRNAi to the 40S ribosome. The eIF-3 complex specifically targets and initiates translation of a subset of mRNAs involved in cell proliferation. In the eIF-3 complex, eif3d specifically recognizes and binds the 7-methylguanosine cap of a subset of mRNAs. The protein is Eukaryotic translation initiation factor 3 subunit D of Phaeosphaeria nodorum (strain SN15 / ATCC MYA-4574 / FGSC 10173) (Glume blotch fungus).